The chain runs to 217 residues: Probable transaldolase (217 aa).

Catalysis depends on Lys-83, which acts as the Schiff-base intermediate with substrate.

This sequence belongs to the transaldolase family. Type 3B subfamily.

It is found in the cytoplasm. The catalysed reaction is D-sedoheptulose 7-phosphate + D-glyceraldehyde 3-phosphate = D-erythrose 4-phosphate + beta-D-fructose 6-phosphate. It functions in the pathway carbohydrate degradation; pentose phosphate pathway; D-glyceraldehyde 3-phosphate and beta-D-fructose 6-phosphate from D-ribose 5-phosphate and D-xylulose 5-phosphate (non-oxidative stage): step 2/3. Transaldolase is important for the balance of metabolites in the pentose-phosphate pathway. This chain is Probable transaldolase, found in Paracoccus denitrificans (strain Pd 1222).